Reading from the N-terminus, the 235-residue chain is MADNIINAQRREEKGKGPARRLRQKGLIPAVVYGRKQEPTHLSVDPASLLKAIETPHKFNTLLTLKLDGAEKHVLFKDWAVDPVSRKLEHADFLEVKLDEAVKVAVPVVTSGRSVGQAEGGILSLATHEVVLEALPSKIPVRIEVDVTNLKIGQSIHVSQLTPPEGCKLKYSSDYVIAFVAVPEKEEVAAPVAAAVPGAAPAEGAAAAGAPAAGAAPAAGGEAAKKAPEAKGAKK.

Disordered stretches follow at residues 1 to 21 and 210 to 235; these read MADNIINAQRREEKGKGPARR and APAAGAAPAAGGEAAKKAPEAKGAKK. Positions 210-222 are enriched in low complexity; sequence APAAGAAPAAGGE. Basic and acidic residues predominate over residues 223–235; it reads AAKKAPEAKGAKK.

The protein belongs to the bacterial ribosomal protein bL25 family. CTC subfamily. As to quaternary structure, part of the 50S ribosomal subunit; part of the 5S rRNA/L5/L18/L25 subcomplex. Contacts the 5S rRNA. Binds to the 5S rRNA independently of L5 and L18.

In terms of biological role, this is one of the proteins that binds to the 5S RNA in the ribosome where it forms part of the central protuberance. In Anaeromyxobacter sp. (strain Fw109-5), this protein is Large ribosomal subunit protein bL25.